Reading from the N-terminus, the 175-residue chain is Calcineurin subunit B (175 aa).

4 EF-hand domains span residues 21 to 56, 60 to 88, 90 to 125, and 131 to 166; these read PELMRLKKRFMKLDKDGSGSIDKDEFLQIPQIANNP, RMIAIFDEDGSGTVDFQEFVGGLSAFSSK, GRDEKLRFAFKVYDMDRDGYISNGELYLVLKQMVGN, and QLQQIVDKTIMEADKDGDGKLSFEEFTQMVASTDIV. The Ca(2+) site is built by Asp34, Asp36, Ser38, Ser40, Glu45, Asp66, Asp68, Ser70, Thr72, Glu77, Asp103, Asp105, Asp107, Tyr109, Glu114, Asp144, Asp146, Asp148, Lys150, and Glu155.

This sequence belongs to the calcineurin regulatory subunit family. As to quaternary structure, composed of a catalytic subunit (A) and a regulatory subunit (B).

In terms of biological role, regulatory subunit of calcineurin, a calcium-dependent, calmodulin stimulated protein phosphatase. Confers calcium sensitivity. Plays a central role in virulence and antifungal drug action. This Cryptococcus neoformans var. neoformans serotype D (strain B-3501A) (Filobasidiella neoformans) protein is Calcineurin subunit B (CNB1).